Here is a 1820-residue protein sequence, read N- to C-terminus: Histone-lysine N-methyltransferase, H3 lysine-9 specific (1820 aa).

Disordered regions lie at residues 1-54 (MPGA…TSMR), 74-251 (NLLP…TPVT), 284-618 (SLSD…APTK), 634-681 (SSER…KKAV), 804-836 (NVDD…SLSK), 850-893 (SSTL…VNSW), 911-944 (HAKK…EQLR), 966-996 (DVES…STDA), 1063-1126 (PLSV…NGAV), 1183-1270 (RYAV…DRTA), 1296-1335 (KASA…TSQQ), and 1385-1407 (RSEP…TDSD). Over residues 11–31 (VDNPLVLDSSDSDDNLSGLPL) the composition is skewed to low complexity. The segment covering 109-129 (ADSSSPPENQNVISFLGNHSQ) has biased composition (polar residues). Residues 152-169 (GGENIAGQNNEANAAQAA) show a composition bias toward low complexity. Polar residues-rich tracts occupy residues 174–204 (GTPS…SAIN) and 212–222 (SIPQQSPSSRA). Low complexity-rich tracts occupy residues 226–236 (RSASIASSRSR), 284–311 (SLSD…TSTT), and 339–352 (TPAT…GPSA). A compositionally biased stretch (basic and acidic residues) spans 361–370 (KSSDQKESPR). Residues 374–385 (SKQPSSPSSTHG) show a composition bias toward polar residues. Residues 400–424 (SATSGKSSAASSRSKSRAPLSSRAA) are compositionally biased toward low complexity. Polar residues predominate over residues 433–442 (SKTTSVSSTH). Positions 443-459 (PPSRASPSSLPSQSQRQ) are enriched in low complexity. Residues 479 to 510 (TLSSGTGQSTPSKFSLPTSDVASNQKNKSTGL) show a composition bias toward polar residues. Low complexity-rich tracts occupy residues 514–531 (PKKP…RTST), 551–563 (QSSS…IQTS), and 594–618 (TKAT…APTK). Composition is skewed to polar residues over residues 643–662 (GKSQ…TAAS) and 810–827 (SAQP…SVSS). The span at 850-861 (SSTLGDSVSGLG) shows a compositional bias: low complexity. A compositionally biased stretch (polar residues) spans 869-893 (TQSMPQSPLPTTNTNNSSGIEVNSW). Composition is skewed to basic and acidic residues over residues 917 to 944 (KERE…EQLR) and 966 to 983 (DVES…ETRK). Positions 1076 to 1089 (SSSSTSTPSLLSRS) are enriched in low complexity. Low complexity predominate over residues 1296 to 1320 (KASAVSPVPSANRPSPAPSAKADLL). The Pre-SET domain maps to 1516–1585 (LGCDCDGPCD…ECMNRVIQRG (70 aa)). Zn(2+) contacts are provided by Cys1518, Cys1520, Cys1524, Cys1531, Cys1533, Cys1567, Cys1571, Cys1573, and Cys1577. Residues 1590 to 1750 (TGIEIFKTKE…KHEELCISYK (161 aa)) enclose the SET domain. S-adenosyl-L-methionine contacts are provided by residues 1600-1602 (KGW), Tyr1643, Arg1704, and 1707-1708 (NH). Position 1710 (Cys1710) interacts with Zn(2+). The segment at 1756–1794 (DDIPSPEPVKKKKGGKGKKQMSKTSASAHPPEMTALNSD) is disordered. Positions 1765-1776 (KKKKGGKGKKQM) are enriched in basic residues. Residues 1800–1816 (VKDICRCGAKNCDGRMF) form the Post-SET domain. Zn(2+) contacts are provided by Cys1804, Cys1806, and Cys1811.

The protein belongs to the class V-like SAM-binding methyltransferase superfamily. Histone-lysine methyltransferase family. Suvar3-9 subfamily.

The protein localises to the nucleus. Its subcellular location is the chromosome. The catalysed reaction is N(6)-methyl-L-lysyl(9)-[histone H3] + S-adenosyl-L-methionine = N(6),N(6)-dimethyl-L-lysyl(9)-[histone H3] + S-adenosyl-L-homocysteine + H(+). It catalyses the reaction L-lysyl(9)-[histone H3] + S-adenosyl-L-methionine = N(6)-methyl-L-lysyl(9)-[histone H3] + S-adenosyl-L-homocysteine + H(+). Histone methyltransferase that specifically dimethylates histone H3 to form H3K9me2. H3K9me2 represents a specific tag for epigenetic transcriptional repression by recruiting HP1 proteins to methylated histones. Mainly functions in heterochromatin regions, thereby playing a central role in the establishment of constitutive heterochromatin at centromeric regions. In Cryptococcus neoformans var. grubii serotype A (strain H99 / ATCC 208821 / CBS 10515 / FGSC 9487) (Filobasidiella neoformans var. grubii), this protein is Histone-lysine N-methyltransferase, H3 lysine-9 specific.